A 210-amino-acid chain; its full sequence is FMN-dependent NADH:quinone oxidoreductase 8 (210 aa).

FMN is bound by residues serine 10 and 16–18 (SIS).

This sequence belongs to the azoreductase type 1 family. In terms of assembly, homodimer. Requires FMN as cofactor.

The enzyme catalyses 2 a quinone + NADH + H(+) = 2 a 1,4-benzosemiquinone + NAD(+). It carries out the reaction N,N-dimethyl-1,4-phenylenediamine + anthranilate + 2 NAD(+) = 2-(4-dimethylaminophenyl)diazenylbenzoate + 2 NADH + 2 H(+). Functionally, quinone reductase that provides resistance to thiol-specific stress caused by electrophilic quinones. In terms of biological role, also exhibits azoreductase activity. Catalyzes the reductive cleavage of the azo bond in aromatic azo compounds to the corresponding amines. This chain is FMN-dependent NADH:quinone oxidoreductase 8, found in Burkholderia lata (strain ATCC 17760 / DSM 23089 / LMG 22485 / NCIMB 9086 / R18194 / 383).